A 401-amino-acid chain; its full sequence is Tyrosine--tRNA ligase (401 aa).

The short motif at 45–54 (PTAPDLHLGH) is the 'HIGH' region element. The 'KMSKS' region motif lies at 230–234 (KMSKS). K233 is a binding site for ATP. The 61-residue stretch at 339 to 399 (IWLAKALVEC…GKRKFAKLKV (61 aa)) folds into the S4 RNA-binding domain.

It belongs to the class-I aminoacyl-tRNA synthetase family. TyrS type 2 subfamily. As to quaternary structure, homodimer.

The protein localises to the cytoplasm. The catalysed reaction is tRNA(Tyr) + L-tyrosine + ATP = L-tyrosyl-tRNA(Tyr) + AMP + diphosphate + H(+). Catalyzes the attachment of tyrosine to tRNA(Tyr) in a two-step reaction: tyrosine is first activated by ATP to form Tyr-AMP and then transferred to the acceptor end of tRNA(Tyr). In Campylobacter jejuni subsp. jejuni serotype O:2 (strain ATCC 700819 / NCTC 11168), this protein is Tyrosine--tRNA ligase.